The primary structure comprises 413 residues: Transforming growth factor beta-2 proprotein (413 aa).

Positions 1–19 (MHYYVLFTFLTLDLAPVAL) are cleaved as a signal peptide. Residues Asn72, Asn140, and Asn241 are each glycosylated (N-linked (GlcNAc...) asparagine). Disulfide bonds link Cys308-Cys317, Cys316-Cys379, Cys345-Cys410, and Cys349-Cys412.

This sequence belongs to the TGF-beta family. In terms of assembly, interacts with Transforming growth factor beta-2 (TGF-beta-2) chain; interaction is non-covalent and maintains (TGF-beta-2) in a latent state. As to quaternary structure, homodimer; disulfide-linked. Interacts with TGF-beta receptors (tgfbr1 and tgfbr2), leading to signal transduction. The precursor proprotein is cleaved in the Golgi apparatus to form Transforming growth factor beta-2 (TGF-beta-2) and Latency-associated peptide (LAP) chains, which remain non-covalently linked, rendering TGF-beta-2 inactive.

The protein localises to the secreted. Its subcellular location is the extracellular space. The protein resides in the extracellular matrix. Precursor of the Latency-associated peptide (LAP) and Transforming growth factor beta-2 (TGF-beta-2) chains, which constitute the regulatory and active subunit of TGF-beta-2, respectively. Functionally, required to maintain the Transforming growth factor beta-2 (TGF-beta-2) chain in a latent state during storage in extracellular matrix. Associates non-covalently with TGF-beta-2 and regulates its activation via interaction with 'milieu molecules', such as ltbp1 and lrrc32/garp, that control activation of TGF-beta-2. Its function is as follows. Multifunctional protein that regulates various processes such as angiogenesis and heart development. Activation into mature form follows different steps: following cleavage of the proprotein in the Golgi apparatus, Latency-associated peptide (LAP) and Transforming growth factor beta-2 (TGF-beta-2) chains remain non-covalently linked rendering TGF-beta-2 inactive during storage in extracellular matrix. At the same time, LAP chain interacts with 'milieu molecules', such as ltbp1 and lrrc32/garp, that control activation of TGF-beta-2 and maintain it in a latent state during storage in extracellular milieus. Once activated following release of LAP, TGF-beta-2 acts by binding to TGF-beta receptors (tgfbr1 and tgfbr2), which transduce signal. This chain is Transforming growth factor beta-2 proprotein (tgfb2), found in Xenopus laevis (African clawed frog).